The chain runs to 132 residues: Large ribosomal subunit protein uL14 (132 aa).

Belongs to the universal ribosomal protein uL14 family. In terms of assembly, part of the 50S ribosomal subunit. Forms a cluster with proteins L3 and L24e, part of which may contact the 16S rRNA in 2 intersubunit bridges.

Functionally, binds to 23S rRNA. Forms part of two intersubunit bridges in the 70S ribosome. The protein is Large ribosomal subunit protein uL14 of Methanococcus maripaludis (strain C5 / ATCC BAA-1333).